The chain runs to 58 residues: Large ribosomal subunit protein eL24 (58 aa).

Zn(2+) contacts are provided by cysteine 6, cysteine 9, cysteine 32, and cysteine 36. Residues 6–36 (CSFCGAEIPPGYGIMYVRNDGTIQRYCSRKC) form a C4-type zinc finger.

This sequence belongs to the eukaryotic ribosomal protein eL24 family. As to quaternary structure, part of the 50S ribosomal subunit. Forms a cluster with proteins L3 and L14. Zn(2+) serves as cofactor.

In terms of biological role, binds to the 23S rRNA. In Pyrobaculum neutrophilum (strain DSM 2338 / JCM 9278 / NBRC 100436 / V24Sta) (Thermoproteus neutrophilus), this protein is Large ribosomal subunit protein eL24.